We begin with the raw amino-acid sequence, 235 residues long: Non-structural maintenance of chromosomes element 1 homolog (235 aa).

An RING-type; atypical zinc finger spans residues 181-225; that stretch reads IKNCTLCKCLVLWDIRCGSCNIQYHRGCIQTYLQRRDICPSCGNL. Thr185 is modified (phosphothreonine).

Belongs to the NSE1 family. Component of the Smc5-Smc6 complex which consists at least of Smc5, Smc6, Nse1, Nse2, Nse4 and MAGE. Nse1, Nse4 and MAGE probably form a subcomplex that bridges the head domains of the Smc5-Smc6 heterodimer. Interacts with MAGE and Nse4.

Its subcellular location is the nucleus. It catalyses the reaction S-ubiquitinyl-[E2 ubiquitin-conjugating enzyme]-L-cysteine + [acceptor protein]-L-lysine = [E2 ubiquitin-conjugating enzyme]-L-cysteine + N(6)-ubiquitinyl-[acceptor protein]-L-lysine.. Its function is as follows. Component of the SMC5-SMC6 complex, a complex involved in repair of DNA double-strand breaks by homologous recombination. The complex may promote sister chromatid homologous recombination by recruiting the SMC1-SMC3 cohesin complex to double-strand breaks. The chain is Non-structural maintenance of chromosomes element 1 homolog from Drosophila melanogaster (Fruit fly).